A 396-amino-acid polypeptide reads, in one-letter code: Elongation factor Tu (396 aa).

The tr-type G domain occupies lysine 10–glutamate 206. A G1 region spans residues glycine 19–threonine 26. Glycine 19–threonine 26 is a GTP binding site. Residue threonine 26 participates in Mg(2+) binding. The tract at residues glycine 60–serine 64 is G2. The G3 stretch occupies residues aspartate 81–glycine 84. Residues aspartate 81–histidine 85 and asparagine 136–aspartate 139 contribute to the GTP site. Residues asparagine 136–aspartate 139 form a G4 region. Positions serine 174–leucine 176 are G5.

The protein belongs to the TRAFAC class translation factor GTPase superfamily. Classic translation factor GTPase family. EF-Tu/EF-1A subfamily. In terms of assembly, monomer.

Its subcellular location is the cytoplasm. The enzyme catalyses GTP + H2O = GDP + phosphate + H(+). Functionally, GTP hydrolase that promotes the GTP-dependent binding of aminoacyl-tRNA to the A-site of ribosomes during protein biosynthesis. This is Elongation factor Tu from Rhodopseudomonas palustris (strain ATCC BAA-98 / CGA009).